Consider the following 105-residue polypeptide: Thiosulfate sulfurtransferase GlpE (105 aa).

Positions 15 to 103 (MQQGAILVDI…WCRAELPIDT (89 aa)) constitute a Rhodanese domain. Cys63 (cysteine persulfide intermediate) is an active-site residue.

Belongs to the GlpE family.

The protein resides in the cytoplasm. It catalyses the reaction thiosulfate + hydrogen cyanide = thiocyanate + sulfite + 2 H(+). It carries out the reaction thiosulfate + [thioredoxin]-dithiol = [thioredoxin]-disulfide + hydrogen sulfide + sulfite + 2 H(+). Its function is as follows. Transferase that catalyzes the transfer of sulfur from thiosulfate to thiophilic acceptors such as cyanide or dithiols. May function in a CysM-independent thiosulfate assimilation pathway by catalyzing the conversion of thiosulfate to sulfite, which can then be used for L-cysteine biosynthesis. The protein is Thiosulfate sulfurtransferase GlpE of Haemophilus influenzae (strain 86-028NP).